The following is a 442-amino-acid chain: MSAGDSIQLFPPTTKQAIEASFVPHGKISPLIKRAVEPVGPLFLAHARRQRHGRTFSEDERLEVKNKVQEEVKEESEDEEEDPAMLRADPKEWKQQDHYAVLGLSKYRYKADTEQIKKAHLKKVLKHHPDKKAASGNINDDSFFKCIQKAYEILSDPVRRRQFDSVDENADVEPPESTTKETFFELWTPVFESEARFSKKQPVPSLGTIESTRAEVDNFYNFWYNFDSWRSFEYLDKDIPDDGESRDNKRFQEKKNRSERQKNKARDNARLRNLVDTALASDPRIKLFKEQEKAAKAARKWEREAGAREAAAAAQKKKEEEERRAAEEAAAKASAAAANKKAKEDKKKAQKRDKKVVKNALKDFNYFSATDVPSAEHVDSVLKDVDVIMSKLGEGELGQLAADINAEKAAGAASVQAVFDKFAKMFIERGSMSSADVVFFAQ.

Residues 49–84 are disordered; it reads RQRHGRTFSEDERLEVKNKVQEEVKEESEDEEEDPA. Thr-55 is subject to Phosphothreonine. Residues 55 to 71 are compositionally biased toward basic and acidic residues; sequence TFSEDERLEVKNKVQEE. 2 positions are modified to phosphoserine: Ser-57 and Ser-76. Acidic residues predominate over residues 72–83; it reads VKEESEDEEEDP. In terms of domain architecture, J spans 97-167; that stretch reads DHYAVLGLSK…VRRRQFDSVD (71 aa). Disordered regions lie at residues 242-270 and 306-331; these read DGES…DNAR and GARE…EAAA. Over residues 316 to 330 the composition is skewed to basic and acidic residues; that stretch reads KKKEEEERRAAEEAA.

In terms of assembly, RAC is a heterodimer of the Hsp70/DnaK-type chaperone ssz1 and the Hsp40/DnaJ-type chaperone zuo1. RAC associates with ribosomes via zuo1.

The protein localises to the cytoplasm. Its function is as follows. Component of the ribosome-associated complex (RAC), a heterodimeric chaperone complex involved in regulation of accurate translation termination and in folding or maintaining nascent polypeptides in a folding-competent state. RAC stimulates the ATPase activity of the ribosome-associated pool of Hsp70-type chaperones SSB1/SSB2 that bind to the nascent polypeptide chain. The chain is Zuotin (zuo1) from Schizosaccharomyces pombe (strain 972 / ATCC 24843) (Fission yeast).